The chain runs to 730 residues: Meiotically up-regulated gene 70 protein (730 aa).

The tract at residues 1–27 is disordered; the sequence is MTVGTLSVVSSTASDTASHVSDTRKRQ. Residues 7-20 are compositionally biased toward low complexity; the sequence is SVVSSTASDTASHV. 4 CBS domains span residues 69–127, 135–200, 263–319, and 328–385; these read ALDP…LNAR, MSTS…RIAR, SSEE…GLDP, and MTPH…PEEE. A run of 2 helical transmembrane segments spans residues 290-310 and 358-378; these read AVLV…DVVL and VVDE…ATAI. The disordered stretch occupies residues 420–517; sequence ENYDVNPPLP…ENGSNSFAAS (98 aa). Composition is skewed to polar residues over residues 458 to 470 and 480 to 515; these read AWQN…NNKP and YNFS…NSFA. Positions 572-649 constitute a PB1 domain; it reads PSQFTIKYRS…ARRRGLPRLE (78 aa). Residues 706–726 form a helical membrane-spanning segment; the sequence is PIYIGIVSSSIVILAVSMWYL.

Its subcellular location is the cytoplasm. The protein resides in the nucleus membrane. Has a role in meiosis. This is Meiotically up-regulated gene 70 protein (mug70) from Schizosaccharomyces pombe (strain 972 / ATCC 24843) (Fission yeast).